Consider the following 251-residue polypeptide: uncharacterized protein (251 aa).

The protein belongs to the FAM243 family.

This is an uncharacterized protein from Homo sapiens (Human).